We begin with the raw amino-acid sequence, 533 residues long: Nitrogen fixation protein AnfA (533 aa).

An a domain region spans residues 33–193 (ILYKISQIIT…PLVELYLIEN (161 aa)). The GAF domain occupies 46–186 (DLADALSIVL…MIATMIAPLV (141 aa)). One can recognise a Sigma-54 factor interaction domain in the interval 219–448 (IIGNSKPMQE…LENVMERAVI (230 aa)). ATP-binding positions include 247–254 (GESGVGKE) and 310–319 (ADGGTIFLDE). Positions 501–520 (IGEAAKELGLARRMLGVRME) form a DNA-binding region, H-T-H motif.

AnfA is essential for nitrogen fixation under Mo- and V-deficient conditions. It is required for the regulation of nitrogenase 3 transcription. Interacts with sigma-54. The protein is Nitrogen fixation protein AnfA (anfA) of Azotobacter vinelandii.